A 417-amino-acid chain; its full sequence is Diaminopimelate decarboxylase (417 aa).

Residue lysine 61 is modified to N6-(pyridoxal phosphate)lysine. Residues glycine 240 and 275–278 each bind pyridoxal 5'-phosphate; that span reads EPGR. 3 residues coordinate substrate: arginine 278, arginine 314, and tyrosine 318. Cysteine 344 serves as the catalytic Proton donor. Positions 345 and 372 each coordinate substrate. Position 372 (tyrosine 372) interacts with pyridoxal 5'-phosphate.

The protein belongs to the Orn/Lys/Arg decarboxylase class-II family. LysA subfamily. As to quaternary structure, homodimer. Pyridoxal 5'-phosphate serves as cofactor.

The enzyme catalyses meso-2,6-diaminopimelate + H(+) = L-lysine + CO2. It functions in the pathway amino-acid biosynthesis; L-lysine biosynthesis via DAP pathway; L-lysine from DL-2,6-diaminopimelate: step 1/1. Specifically catalyzes the decarboxylation of meso-diaminopimelate (meso-DAP) to L-lysine. The chain is Diaminopimelate decarboxylase (lysA) from Vibrio cholerae serotype O1 (strain ATCC 39315 / El Tor Inaba N16961).